The following is a 464-amino-acid chain: Mitogen-activated protein kinase 10 (464 aa).

Residues 64 to 359 (YQNLKPIGSG…VDDALQHPYI (296 aa)) form the Protein kinase domain. ATP contacts are provided by residues 70 to 78 (IGSGAQGIV) and lysine 93. Aspartate 189 (proton acceptor) is an active-site residue. Threonine 221 is subject to Phosphothreonine; by MAP2K7. The TXY motif lies at 221–223 (TPY). Position 223 is a phosphotyrosine; by MAP2K4 (tyrosine 223). The disordered stretch occupies residues 405-464 (TKNGVVKSQPSPSGAAVNSSESLPPSSAVNDISSMSTDQTLASDTDSSLEASAGPLGCCR). The segment covering 410 to 454 (VKSQPSPSGAAVNSSESLPPSSAVNDISSMSTDQTLASDTDSSLE) has biased composition (polar residues). S-palmitoyl cysteine attachment occurs at residues cysteine 462 and cysteine 463.

The protein belongs to the protein kinase superfamily. CMGC Ser/Thr protein kinase family. MAP kinase subfamily. As to quaternary structure, interacts with MAPK8IP1/JIP-1, MAPK8IP3/JIP-3/JSAP1 and SPAG9/MAPK8IP4/JIP4. Interacts with HDAC9 and MAPKBP1. Interacts with ARRB2; the interaction enhances MAPK10 activation by MAP3K5. Interacts with SARM1. Interacts with JUND; interaction is inhibited in the presence of MEN1. Mg(2+) serves as cofactor. Dually phosphorylated on Thr-221 and Tyr-223 by MAP2K4 and MAP2K7, which activates the enzyme. MAP2K7 shows a strong preference for Thr-221 while MAP2K4 phosphorylates Tyr-223 preferentially. Weakly autophosphorylated on threonine and tyrosine residues in vitro. Post-translationally, palmitoylation regulates subcellular location and axonal development. As to expression, brain (at protein level). Expressed specifically in neurons of the hippocampus, cortex, cerebellum, brainstem, and spinal cord. Seems to be also found in testis, and very weakly in the heart.

Its subcellular location is the cytoplasm. The protein localises to the membrane. It localises to the nucleus. It is found in the mitochondrion. It carries out the reaction L-seryl-[protein] + ATP = O-phospho-L-seryl-[protein] + ADP + H(+). The catalysed reaction is L-threonyl-[protein] + ATP = O-phospho-L-threonyl-[protein] + ADP + H(+). Activated by threonine and tyrosine phosphorylation by two dual specificity kinases, MAP2K4 and MAP2K7. MAP2K7 phosphorylates MAPK10 on Thr-221 causing a conformational change and a large increase in Vmax for the enzyme. MAP2K4 then phosphorylates Tyr-223 resulting in a further increase in Vmax. Inhibited by dual specificity phosphatases, such as DUSP1. Inhibited by HDAC9. In terms of biological role, serine/threonine-protein kinase involved in various processes such as neuronal proliferation, differentiation, migration and programmed cell death. Extracellular stimuli such as pro-inflammatory cytokines or physical stress stimulate the stress-activated protein kinase/c-Jun N-terminal kinase (SAP/JNK) signaling pathway. In this cascade, two dual specificity kinases MAP2K4/MKK4 and MAP2K7/MKK7 phosphorylate and activate MAPK10/JNK3. In turn, MAPK10/JNK3 phosphorylates a number of transcription factors, primarily components of AP-1 such as JUN and ATF2 and thus regulates AP-1 transcriptional activity. Plays regulatory roles in the signaling pathways during neuronal apoptosis. Phosphorylates the neuronal microtubule regulator STMN2. Acts in the regulation of the amyloid-beta precursor protein/APP signaling during neuronal differentiation by phosphorylating APP. Also participates in neurite growth in spiral ganglion neurons. Phosphorylates the CLOCK-BMAL1 heterodimer and plays a role in the photic regulation of the circadian clock. Phosphorylates JUND and this phosphorylation is inhibited in the presence of MEN1. This chain is Mitogen-activated protein kinase 10 (Mapk10), found in Mus musculus (Mouse).